The following is a 224-amino-acid chain: Cytidylate kinase (224 aa).

14–22 (GPAGSGKST) is an ATP binding site.

Belongs to the cytidylate kinase family. Type 1 subfamily.

The protein resides in the cytoplasm. It catalyses the reaction CMP + ATP = CDP + ADP. It carries out the reaction dCMP + ATP = dCDP + ADP. The protein is Cytidylate kinase of Mycoplasmoides gallisepticum (strain R(low / passage 15 / clone 2)) (Mycoplasma gallisepticum).